A 1863-amino-acid chain; its full sequence is Breast cancer type 1 susceptibility protein homolog (1863 aa).

Position 1 is an N-acetylmethionine (Met1). The segment at 24–65 adopts an RING-type zinc-finger fold; that stretch reads CPICLELIKEPVSTKCDHIFCKFCMLKLLNQKKGPSQCPLCK. Residue Lys109 forms a Glycyl lysine isopeptide (Lys-Gly) (interchain with G-Cter in SUMO2) linkage. Position 114 is a phosphoserine (Ser114). Residues 230 to 267 are disordered; it reads ETDVTNTEHHQPSNNDLNTTEKRATERHPEKYQGSSVS. Residues 248 to 260 show a composition bias toward basic and acidic residues; sequence TTEKRATERHPEK. Residue Lys301 forms a Glycyl lysine isopeptide (Lys-Gly) (interchain with G-Cter in SUMO2) linkage. Residues 306–338 are disordered; that stretch reads NKSKQPGLARSQHNRWAGSKETCNDRRTPSTEK. Over residues 327-338 the composition is skewed to basic and acidic residues; it reads TCNDRRTPSTEK. A Glycyl lysine isopeptide (Lys-Gly) (interchain with G-Cter in SUMO2) cross-link involves residue Lys339. A phosphoserine mark is found at Ser395, Ser398, Ser423, and Ser434. Glycyl lysine isopeptide (Lys-Gly) (interchain with G-Cter in SUMO2) cross-links involve residues Lys443, Lys459, and Lys519. Position 551 is a phosphoserine (Ser551). Residues Lys583 and Lys654 each participate in a glycyl lysine isopeptide (Lys-Gly) (interchain with G-Cter in SUMO2) cross-link. The interval 650–739 is disordered; the sequence is IKKKKYNQMP…EKEEKLETVK (90 aa). Ser694, Ser708, and Ser725 each carry phosphoserine. Residues 705–716 show a composition bias toward polar residues; it reads APGSFTNCSNTS. Residues 727–737 show a composition bias toward basic and acidic residues; that stretch reads PREEKEEKLET. Residues Lys734 and Lys739 each participate in a glycyl lysine isopeptide (Lys-Gly) (interchain with G-Cter in SUMO2) cross-link. Ser753 and Ser840 each carry phosphoserine. The interval 896-915 is disordered; it reads SPKVTFEREQKEQNQGKNES. Over residues 900-909 the composition is skewed to basic and acidic residues; the sequence is TFEREQKEQN. Residues Lys918 and Lys987 each participate in a glycyl lysine isopeptide (Lys-Gly) (interchain with G-Cter in SUMO2) cross-link. Ser988 bears the Phosphoserine; by CHEK2 mark. A Phosphoserine modification is found at Ser1009. Residue Lys1079 forms a Glycyl lysine isopeptide (Lys-Gly) (interchain with G-Cter in SUMO2) linkage. Residues Ser1143, Ser1189, Ser1191, Ser1211, Ser1217, Ser1218, Ser1280, Ser1328, Ser1336, Ser1342, and Ser1387 each carry the phosphoserine modification. Positions 1181 to 1216 are disordered; it reads VQRGELSRSPSPFTHTHLAQGYRRGAKKLESSEENL. Residues 1322–1395 form a disordered region; it reads KQMRHQSESQ…SSQSDILTTQ (74 aa). Positions 1373–1395 are enriched in polar residues; sequence ESETSVSEDCSGLSSQSDILTTQ. Thr1394 carries the phosphothreonine modification. Residues 1397–1424 are interaction with PALB2; that stretch reads RDTMQDNLIKLQQEMAELEAVLEQHGSQ. Residues Ser1423, Ser1457, Ser1524, and Ser1542 each carry the phosphoserine modification. A disordered region spans residues 1440 to 1505; sequence EDLQNPEQST…SSPSKCPSLD (66 aa). The span at 1444–1470 shows a compositional bias: polar residues; that stretch reads NPEQSTSEKAVLTSQKSSEYPISQNPE. Residues 1565 to 1642 form a disordered region; the sequence is ESGISLFSDD…SREKPELTAS (78 aa). Over residues 1610 to 1624 the composition is skewed to polar residues; the sequence is SAQSPAAAHTTNTAG. BRCT domains lie at 1642 to 1736 and 1756 to 1855; these read STER…DFEV and QDRK…TYLI.

In terms of assembly, heterodimer with BARD1. Part of the BRCA1-associated genome surveillance complex (BASC), which contains BRCA1, MSH2, MSH6, MLH1, ATM, BLM, PMS2 and the MRE11-RAD50-NBN protein (MRN) complex. This association could be a dynamic process changing throughout the cell cycle and within subnuclear domains. Component of the BRCA1-A complex, at least composed of BRCA1, BARD1, UIMC1/RAP80, ABRAXAS1, BRCC3/BRCC36, BABAM2 and BABAM1/NBA1. Interacts (via the BRCT domains) with ABRAXAS1 (phosphorylated form); this is important for recruitment to sites of DNA damage. Can form a heterotetramer with two molecules of ABRAXAS1 (phosphorylated form). Component of the BRCA1-RBBP8 complex. Interacts (via the BRCT domains) with RBBP8 ('Ser-327' phosphorylated form); the interaction ubiquitinates RBBP8, regulates CHEK1 activation, and involves RBBP8 in BRCA1-dependent G2/M checkpoint control on DNA damage. Associates with RNA polymerase II holoenzyme. Interacts with SMC1A, NELFB, DCLRE1C, CLSPN. CHEK1, CHEK2, BAP1, BRCC3, UBXN1 and PCLAF. Interacts (via BRCT domains) with BRIP1 (phosphorylated form). Interacts with FANCD2 (ubiquitinated form). Interacts with H2AX (phosphorylated on 'Ser-140'). Interacts (via the BRCT domains) with ACACA (phosphorylated form); the interaction prevents dephosphorylation of ACACA. Part of a BRCA complex containing BRCA1, BRCA2 and PALB2. Interacts directly with PALB2; the interaction is essential for its function in HRR. Interacts directly with BRCA2; the interaction occurs only in the presence of PALB2 which serves as the bridging protein. Interacts (via the BRCT domains) with LMO4; the interaction represses the transcriptional activity of BRCA1. Interacts (via the BRCT domains) with CCAR2 (via N-terminus); the interaction represses the transcriptional activator activity of BRCA1. Interacts with EXD2. Interacts (via C-terminus) with DHX9; this interaction is direct and links BRCA1 to the RNA polymerase II holoenzyme. Interacts with DNA helicase ZGRF1; the interaction is increased following DNA damage induction. In terms of processing, phosphorylated in response to IR, UV, and various stimuli that cause checkpoint activation, probably by ATM or ATR. Phosphorylation at Ser-988 by CHEK2 regulates mitotic spindle assembly. Phosphorylation by AURKA regulates centrosomal microtubule nucleation. Autoubiquitinated, undergoes 'Lys-6'-linked polyubiquitination. 'Lys-6'-linked polyubiquitination does not promote degradation.

The protein resides in the nucleus. It is found in the chromosome. It localises to the cytoplasm. The enzyme catalyses S-ubiquitinyl-[E2 ubiquitin-conjugating enzyme]-L-cysteine + [acceptor protein]-L-lysine = [E2 ubiquitin-conjugating enzyme]-L-cysteine + N(6)-ubiquitinyl-[acceptor protein]-L-lysine.. Its function is as follows. E3 ubiquitin-protein ligase that specifically mediates the formation of 'Lys-6'-linked polyubiquitin chains and plays a central role in DNA repair by facilitating cellular responses to DNA damage. It is unclear whether it also mediates the formation of other types of polyubiquitin chains. The BRCA1-BARD1 heterodimer coordinates a diverse range of cellular pathways such as DNA damage repair, ubiquitination and transcriptional regulation to maintain genomic stability. Regulates centrosomal microtubule nucleation. Required for appropriate cell cycle arrests after ionizing irradiation in both the S-phase and the G2 phase of the cell cycle. Required for FANCD2 targeting to sites of DNA damage. Inhibits lipid synthesis by binding to inactive phosphorylated ACACA and preventing its dephosphorylation. Contributes to homologous recombination repair (HRR) via its direct interaction with PALB2, fine-tunes recombinational repair partly through its modulatory role in the PALB2-dependent loading of BRCA2-RAD51 repair machinery at DNA breaks. Component of the BRCA1-RBBP8 complex which regulates CHEK1 activation and controls cell cycle G2/M checkpoints on DNA damage via BRCA1-mediated ubiquitination of RBBP8. Acts as a transcriptional activator. This chain is Breast cancer type 1 susceptibility protein homolog (BRCA1), found in Pan troglodytes (Chimpanzee).